The sequence spans 272 residues: Ribosomal RNA small subunit methyltransferase A (272 aa).

Residues Asn-18, Leu-20, Gly-45, Glu-66, Asp-91, and Asn-113 each coordinate S-adenosyl-L-methionine.

It belongs to the class I-like SAM-binding methyltransferase superfamily. rRNA adenine N(6)-methyltransferase family. RsmA subfamily.

It is found in the cytoplasm. It catalyses the reaction adenosine(1518)/adenosine(1519) in 16S rRNA + 4 S-adenosyl-L-methionine = N(6)-dimethyladenosine(1518)/N(6)-dimethyladenosine(1519) in 16S rRNA + 4 S-adenosyl-L-homocysteine + 4 H(+). Specifically dimethylates two adjacent adenosines (A1518 and A1519) in the loop of a conserved hairpin near the 3'-end of 16S rRNA in the 30S particle. May play a critical role in biogenesis of 30S subunits. This chain is Ribosomal RNA small subunit methyltransferase A, found in Yersinia enterocolitica serotype O:8 / biotype 1B (strain NCTC 13174 / 8081).